Reading from the N-terminus, the 304-residue chain is Probable casein kinase I homolog ECU03_0910 (304 aa).

Residues 8-304 form the Protein kinase domain; it reads IKLVQKIASG…SDSMGDLEIL (297 aa). ATP contacts are provided by residues 14–22 and Lys37; that span reads IASGAFGDI. Asp129 (proton acceptor) is an active-site residue.

It belongs to the protein kinase superfamily. CK1 Ser/Thr protein kinase family. Casein kinase I subfamily.

Its subcellular location is the nucleus. The enzyme catalyses L-seryl-[protein] + ATP = O-phospho-L-seryl-[protein] + ADP + H(+). The catalysed reaction is L-threonyl-[protein] + ATP = O-phospho-L-threonyl-[protein] + ADP + H(+). Functionally, involved in DNA repair. May regulate the activity of protein(s) involved in double strand break repair caused by gamma rays. The polypeptide is Probable casein kinase I homolog ECU03_0910 (Encephalitozoon cuniculi (strain GB-M1) (Microsporidian parasite)).